We begin with the raw amino-acid sequence, 119 residues long: Nucleoid-associated protein Cphy_0047 (119 aa).

A disordered region spans residues 23–45 (AQRMQKQMEDKTKEMEEKQWEAT). Basic and acidic residues predominate over residues 28 to 42 (KQMEDKTKEMEEKQW).

It belongs to the YbaB/EbfC family. Homodimer.

The protein resides in the cytoplasm. The protein localises to the nucleoid. In terms of biological role, binds to DNA and alters its conformation. May be involved in regulation of gene expression, nucleoid organization and DNA protection. The sequence is that of Nucleoid-associated protein Cphy_0047 from Lachnoclostridium phytofermentans (strain ATCC 700394 / DSM 18823 / ISDg) (Clostridium phytofermentans).